The following is an 83-amino-acid chain: Conotoxin MiEr92 (83 aa).

Residues 1–22 (MKLTCVLIVIMLFLTVCPLITA) form the signal peptide. Positions 23 to 49 (DHSRDKQEHPAMRLKDRIRYLRRGKLT) are excised as a propeptide. Intrachain disulfides connect Cys52–Cys67, Cys59–Cys72, and Cys66–Cys81.

It belongs to the conotoxin O1 superfamily. In terms of tissue distribution, expressed by the venom duct.

Its subcellular location is the secreted. In Conus miles (Soldier cone), this protein is Conotoxin MiEr92.